The following is a 418-amino-acid chain: MTLLALGINHKTAPVSLRERVTFSPDTLDQALDSLLAQPMVQGGVVLSTCNRTELYLSVEEQDNLQEALIRWLCDYHNLNEDDLRNSLYWHQDNDAVSHLMRVASGLDSLVLGEPQILGQVKKAFADSQKGHLHASALERMFQKSFSVAKRVRTETDIGASAVSVAFAACTLARQIFESLSTVTVLLVGAGETIELVARHLREHKVQKMIIANRTRERAQVLADEVGAEVISLSDIDERLREADIIISSTASPLPIIGKGMVERALKSRRNQPMLLVDIAVPRDVEPEVGKLANAYLYSVDDLQSIISHNLAQRKAAAVEAETIVAQEASEFMAWLRSQSASETIREYRSQSEHVRDELTVKALAALEQGGDAQAILQDLAWKLTNRLIHAPTKSLQQAARDGDDERLNILRDSLGLE.

Substrate is bound by residues 49–52, serine 109, 114–116, and glutamine 120; these read TCNR and EPQ. The active-site Nucleophile is cysteine 50. Position 189 to 194 (189 to 194) interacts with NADP(+); the sequence is GAGETI.

This sequence belongs to the glutamyl-tRNA reductase family. Homodimer.

It catalyses the reaction (S)-4-amino-5-oxopentanoate + tRNA(Glu) + NADP(+) = L-glutamyl-tRNA(Glu) + NADPH + H(+). Its pathway is porphyrin-containing compound metabolism; protoporphyrin-IX biosynthesis; 5-aminolevulinate from L-glutamyl-tRNA(Glu): step 1/2. Functionally, catalyzes the NADPH-dependent reduction of glutamyl-tRNA(Glu) to glutamate 1-semialdehyde (GSA). In Citrobacter koseri (strain ATCC BAA-895 / CDC 4225-83 / SGSC4696), this protein is Glutamyl-tRNA reductase.